A 435-amino-acid chain; its full sequence is Enolase (435 aa).

Q163 provides a ligand contact to (2R)-2-phosphoglycerate. E205 (proton donor) is an active-site residue. 3 residues coordinate Mg(2+): D243, E292, and D319. 4 residues coordinate (2R)-2-phosphoglycerate: K344, R373, S374, and K395. K344 functions as the Proton acceptor in the catalytic mechanism.

It belongs to the enolase family. As to quaternary structure, homooctamer, a tetramer of homodimers. Mg(2+) is required as a cofactor.

The protein localises to the cytoplasm. Its subcellular location is the secreted. It localises to the cell surface. It is found in the cell wall. The enzyme catalyses (2R)-2-phosphoglycerate = phosphoenolpyruvate + H2O. Its pathway is carbohydrate degradation; glycolysis; pyruvate from D-glyceraldehyde 3-phosphate: step 4/5. Functionally, catalyzes the reversible conversion of 2-phosphoglycerate (2-PG) into phosphoenolpyruvate (PEP). It is essential for the degradation of carbohydrates via glycolysis. 'Moonlights' as a plasminogen receptor. Binds plasminogen and more weakly plasmin when expressed on the bacterial cell surface; probably has more than one plasmin(ogen) binding site, may bind via Lys residues. Plasminogen binding potentially allows the bacterium to acquire surface-associated proteolytic activity, which in turn contributes to tissue invasion and virulence. The protein is Enolase of Streptococcus pyogenes serotype M6 (strain ATCC BAA-946 / MGAS10394).